Reading from the N-terminus, the 230-residue chain is Large ribosomal subunit protein uL1c (230 aa).

It belongs to the universal ribosomal protein uL1 family. In terms of assembly, part of the 50S ribosomal subunit.

It is found in the plastid. Its subcellular location is the chloroplast. Binds directly to 23S rRNA. Might be involved in E site tRNA release (Potential). The chain is Large ribosomal subunit protein uL1c (rpl1) from Trieres chinensis (Marine centric diatom).